A 328-amino-acid polypeptide reads, in one-letter code: Probable E3 ubiquitin-protein ligase RHC1A (328 aa).

An N-acetylserine modification is found at Ser-2. The segment at 190–231 (CPVCKDEFELGSEAKQMPCNHIYHSDCIVPWLVQHNSCPVCR) adopts an RING-type; atypical zinc-finger fold. Positions 233 to 324 (ELPSASGPSS…QQSYMGYSGW (92 aa)) are disordered. Residues 238-250 (SGPSSSQNRTTPT) are compositionally biased toward polar residues. Composition is skewed to low complexity over residues 251-266 (RNYR…NSRE) and 275-290 (FSSF…SSSS). Polar residues predominate over residues 291 to 300 (TQNRGGTRNS).

The catalysed reaction is S-ubiquitinyl-[E2 ubiquitin-conjugating enzyme]-L-cysteine + [acceptor protein]-L-lysine = [E2 ubiquitin-conjugating enzyme]-L-cysteine + N(6)-ubiquitinyl-[acceptor protein]-L-lysine.. The protein operates within protein modification; protein ubiquitination. Probable E3 ubiquitin-protein ligase that may possess E3 ubiquitin ligase activity in vitro. This chain is Probable E3 ubiquitin-protein ligase RHC1A, found in Arabidopsis thaliana (Mouse-ear cress).